Reading from the N-terminus, the 513-residue chain is ATP synthase subunit alpha (513 aa).

169-176 (GDRQVGKT) provides a ligand contact to ATP.

Belongs to the ATPase alpha/beta chains family. As to quaternary structure, F-type ATPases have 2 components, CF(1) - the catalytic core - and CF(0) - the membrane proton channel. CF(1) has five subunits: alpha(3), beta(3), gamma(1), delta(1), epsilon(1). CF(0) has three main subunits: a(1), b(2) and c(9-12). The alpha and beta chains form an alternating ring which encloses part of the gamma chain. CF(1) is attached to CF(0) by a central stalk formed by the gamma and epsilon chains, while a peripheral stalk is formed by the delta and b chains.

It localises to the cell inner membrane. It catalyses the reaction ATP + H2O + 4 H(+)(in) = ADP + phosphate + 5 H(+)(out). In terms of biological role, produces ATP from ADP in the presence of a proton gradient across the membrane. The alpha chain is a regulatory subunit. The protein is ATP synthase subunit alpha of Aeromonas hydrophila subsp. hydrophila (strain ATCC 7966 / DSM 30187 / BCRC 13018 / CCUG 14551 / JCM 1027 / KCTC 2358 / NCIMB 9240 / NCTC 8049).